Consider the following 116-residue polypeptide: MALKIRLRQQGCKNHVVYRLVLADVESPRDGKYIELLGWYDPHSEQNYQLKSERIFYWLNQGAELTEKAGALVKQGAPGVYAELMAKKVARRAVVRQKRRAYRQRLAARKAEAAAK.

This sequence belongs to the bacterial ribosomal protein bS16 family.

This chain is Small ribosomal subunit protein bS16, found in Chlamydia trachomatis serovar A (strain ATCC VR-571B / DSM 19440 / HAR-13).